The chain runs to 105 residues: UPF0235 protein RF_1332 (105 aa).

This sequence belongs to the UPF0235 family.

The protein is UPF0235 protein RF_1332 of Rickettsia felis (strain ATCC VR-1525 / URRWXCal2) (Rickettsia azadi).